The primary structure comprises 255 residues: 5'-nucleotidase SurE (255 aa).

A divalent metal cation-binding residues include Asp8, Asp9, Ser39, and Asn95.

This sequence belongs to the SurE nucleotidase family. The cofactor is a divalent metal cation.

Its subcellular location is the cytoplasm. The enzyme catalyses a ribonucleoside 5'-phosphate + H2O = a ribonucleoside + phosphate. Nucleotidase that shows phosphatase activity on nucleoside 5'-monophosphates. The sequence is that of 5'-nucleotidase SurE from Thermosipho africanus (strain TCF52B).